The following is a 57-amino-acid chain: UPF0057 membrane protein T23F2.3 (57 aa).

A run of 2 helical transmembrane segments spans residues 4-24 and 36-56; these read TCTDIPKFICAVLLPPIGVFL and ILLTILGYIPGIIYACYVILA.

It belongs to the UPF0057 (PMP3) family.

It localises to the membrane. This chain is UPF0057 membrane protein T23F2.3, found in Caenorhabditis elegans.